We begin with the raw amino-acid sequence, 704 residues long: Phosphate acetyltransferase (704 aa).

The phosphate acetyltransferase stretch occupies residues 379-704 (AFRYQVVQRA…AIQADAQAPA (326 aa)).

It in the N-terminal section; belongs to the CobB/CobQ family. The protein in the C-terminal section; belongs to the phosphate acetyltransferase and butyryltransferase family. As to quaternary structure, homohexamer.

The protein resides in the cytoplasm. It carries out the reaction acetyl-CoA + phosphate = acetyl phosphate + CoA. The protein operates within metabolic intermediate biosynthesis; acetyl-CoA biosynthesis; acetyl-CoA from acetate: step 2/2. Activity is increased under anaerobic growth conditions. In terms of biological role, involved in acetate metabolism. In combination with LdhA and AckA, allows fermentation of pyruvate, enhancing long-term survival under anaerobic conditions. In Pseudomonas aeruginosa (strain ATCC 15692 / DSM 22644 / CIP 104116 / JCM 14847 / LMG 12228 / 1C / PRS 101 / PAO1), this protein is Phosphate acetyltransferase (pta).